The primary structure comprises 481 residues: Protein FIZZY-RELATED 3 (481 aa).

A disordered region spans residues 100 to 165 (PAGGQGSASS…RKVPKTPHKV (66 aa)). Over residues 125–136 (SNSSPSSPFSPS) the composition is skewed to low complexity. Residues 154–163 (PPRKVPKTPH) show a composition bias toward basic residues. WD repeat units lie at residues 172 to 209 (QDDF…VTKL), 213 to 252 (GPND…RVRT), 255 to 292 (GHQT…DFVS), 296 to 335 (GHKS…PILK), 338 to 380 (EHTA…QLNS), 382 to 423 (DTGS…KVAT), and 426 to 465 (GHSM…KMQT).

Belongs to the WD repeat CDC20/Fizzy family. As to quaternary structure, associates with the APC/C complex. Interacts with CDC20-1, CDC20-2, CYCA1-1, CYCA3-4, CYCB1-1 and CYCB1-2. Binds to GIG1 and PYM.

Its pathway is protein modification; protein ubiquitination. Functionally, activator protein that regulates the ubiquitin ligase activity and substrate specificity of the anaphase promoting complex/cyclosome (APC/C). The polypeptide is Protein FIZZY-RELATED 3 (FZR3) (Arabidopsis thaliana (Mouse-ear cress)).